The following is a 230-amino-acid chain: Germin-like protein 5-1 (230 aa).

A signal peptide spans 1–20; that stretch reads MAMVGRSLLLLLLLVTLAAG. Cys-38 and Cys-53 are oxidised to a cystine. The Cupin type-1 domain maps to 86–219; sequence YGFTARSVDI…TLLTDEATVD (134 aa). Residues His-119, His-121, Glu-126, and His-167 each contribute to the Mn(2+) site. A glycan (N-linked (GlcNAc...) asparagine) is linked at Asn-172.

The protein belongs to the germin family. In terms of assembly, oligomer (believed to be a pentamer but probably hexamer).

The protein localises to the secreted. The protein resides in the extracellular space. Its subcellular location is the apoplast. May play a role in plant defense. Probably has no oxalate oxidase activity even if the active site is conserved. The protein is Germin-like protein 5-1 of Oryza sativa subsp. japonica (Rice).